Here is a 280-residue protein sequence, read N- to C-terminus: Diaminopimelate epimerase (280 aa).

Substrate-binding residues include N14 and N67. Residue C76 is the Proton donor of the active site. Substrate is bound by residues 77-78 (GN), N193, and 210-211 (ER). C220 serves as the catalytic Proton acceptor. Substrate is bound at residue 221 to 222 (GT).

The protein belongs to the diaminopimelate epimerase family. In terms of assembly, homodimer.

It is found in the cytoplasm. The enzyme catalyses (2S,6S)-2,6-diaminopimelate = meso-2,6-diaminopimelate. It functions in the pathway amino-acid biosynthesis; L-lysine biosynthesis via DAP pathway; DL-2,6-diaminopimelate from LL-2,6-diaminopimelate: step 1/1. Catalyzes the stereoinversion of LL-2,6-diaminopimelate (L,L-DAP) to meso-diaminopimelate (meso-DAP), a precursor of L-lysine. This is Diaminopimelate epimerase from Methanocella arvoryzae (strain DSM 22066 / NBRC 105507 / MRE50).